Reading from the N-terminus, the 495-residue chain is Cysteine--tRNA ligase (495 aa).

Position 29 (C29) interacts with Zn(2+). The 'HIGH' region motif lies at 31–41 (PTVYDYGHIGN). The Zn(2+) site is built by C211, H236, and E240. The 'KMSKS' region signature appears at 268-272 (KMSKS). K271 provides a ligand contact to ATP.

This sequence belongs to the class-I aminoacyl-tRNA synthetase family. Monomer. Zn(2+) serves as cofactor.

The protein resides in the cytoplasm. The enzyme catalyses tRNA(Cys) + L-cysteine + ATP = L-cysteinyl-tRNA(Cys) + AMP + diphosphate. The sequence is that of Cysteine--tRNA ligase from Koribacter versatilis (strain Ellin345).